The chain runs to 483 residues: Phosphoenolpyruvate carboxylase (483 aa).

The interval 1–20 (MKVPRCMSTQHPDNVNPPFF) is disordered.

Belongs to the PEPCase type 2 family. In terms of assembly, homotetramer. It depends on Mg(2+) as a cofactor.

It catalyses the reaction oxaloacetate + phosphate = phosphoenolpyruvate + hydrogencarbonate. Its activity is regulated as follows. Inhibited by NaCl, KCl, ATP, ADP, GTP and aspartate. Unlike E.coli, not regulated by acetyl-CoA. In terms of biological role, catalyzes the irreversible beta-carboxylation of phosphoenolpyruvate (PEP) to form oxaloacetate (OAA), a four-carbon dicarboxylic acid source for the tricarboxylic acid cycle. This is Phosphoenolpyruvate carboxylase (ppcA) from Methanothermobacter thermautotrophicus (strain ATCC 29096 / DSM 1053 / JCM 10044 / NBRC 100330 / Delta H) (Methanobacterium thermoautotrophicum).